The sequence spans 188 residues: dCTP deaminase (188 aa).

DCTP-binding positions include 111–116, 135–137, Gln156, Tyr170, and Gln180; these read KSTYAR and TLE. Glu137 acts as the Proton donor/acceptor in catalysis.

It belongs to the dCTP deaminase family. As to quaternary structure, homotrimer.

The catalysed reaction is dCTP + H2O + H(+) = dUTP + NH4(+). It functions in the pathway pyrimidine metabolism; dUMP biosynthesis; dUMP from dCTP (dUTP route): step 1/2. Catalyzes the deamination of dCTP to dUTP. The protein is dCTP deaminase of Dichelobacter nodosus (strain VCS1703A).